The following is a 429-amino-acid chain: Aspartate--tRNA(Asp/Asn) ligase (429 aa).

L-aspartate is bound at residue Glu-166. Residues 188–191 (QLYK) form an aspartate region. Arg-210 provides a ligand contact to L-aspartate. ATP-binding positions include 210 to 212 (RAE), 218 to 220 (RHL), and Glu-352. Residues Glu-352 and Ser-355 each contribute to the Mg(2+) site. L-aspartate contacts are provided by Ser-355 and Arg-359. ATP is bound at residue 400 to 403 (GIER).

Belongs to the class-II aminoacyl-tRNA synthetase family. Type 2 subfamily. In terms of assembly, homodimer. Mg(2+) serves as cofactor.

The protein resides in the cytoplasm. The enzyme catalyses tRNA(Asx) + L-aspartate + ATP = L-aspartyl-tRNA(Asx) + AMP + diphosphate. Its function is as follows. Aspartyl-tRNA synthetase with relaxed tRNA specificity since it is able to aspartylate not only its cognate tRNA(Asp) but also tRNA(Asn). Reaction proceeds in two steps: L-aspartate is first activated by ATP to form Asp-AMP and then transferred to the acceptor end of tRNA(Asp/Asn). This Methanoculleus marisnigri (strain ATCC 35101 / DSM 1498 / JR1) protein is Aspartate--tRNA(Asp/Asn) ligase.